Here is a 424-residue protein sequence, read N- to C-terminus: 3-ketoacyl-CoA thiolase B, peroxisomal (424 aa).

The N-terminal 26 residues, 1 to 26 (MHRLQVVLGHLAGRSESSSALQAAPC), are a transit peptide targeting the peroxisome. The segment at 1–26 (MHRLQVVLGHLAGRSESSSALQAAPC) is PTS2-type peroxisomal targeting signal. The Acyl-thioester intermediate role is filled by cysteine 123. N6-acetyllysine is present on residues lysine 173 and lysine 234. Residues arginine 249, threonine 252, and serine 276 each coordinate CoA. The active-site Proton donor/acceptor is cysteine 408.

It belongs to the thiolase-like superfamily. Thiolase family. As to quaternary structure, homodimer. Interacts (via PTS2-type peroxisomal targeting signal region) with PEX7; leading to its translocation into peroxisomes.

It is found in the peroxisome. The catalysed reaction is an acyl-CoA + acetyl-CoA = a 3-oxoacyl-CoA + CoA. It carries out the reaction 2 acetyl-CoA = acetoacetyl-CoA + CoA. The enzyme catalyses hexanoyl-CoA + acetyl-CoA = 3-oxooctanoyl-CoA + CoA. It catalyses the reaction tetradecanoyl-CoA + acetyl-CoA = 3-oxohexadecanoyl-CoA + CoA. The catalysed reaction is 3-oxohexadecanedioyl-CoA + CoA = tetradecanedioyl-CoA + acetyl-CoA. It carries out the reaction 3-oxo-(6Z,9Z,12Z,15Z,18Z,21Z)-tetracosahexaenoyl-CoA + CoA = (4Z,7Z,10Z,13Z,16Z,19Z)-docosahexaenoyl-CoA + acetyl-CoA. The protein operates within lipid metabolism; peroxisomal fatty acid beta-oxidation. In terms of biological role, responsible for the thiolytic cleavage of straight chain 3-keto fatty acyl-CoAs (3-oxoacyl-CoAs). Plays an important role in fatty acid peroxisomal beta-oxidation. Catalyzes the cleavage of short, medium, long, and very long straight chain 3-oxoacyl-CoAs. Medium chain straight 3-oxoacyl-CoAs are preferred substrates. This Rattus norvegicus (Rat) protein is 3-ketoacyl-CoA thiolase B, peroxisomal.